Reading from the N-terminus, the 323-residue chain is V-type ATP synthase subunit C (323 aa).

The protein belongs to the V-ATPase V0D/AC39 subunit family.

Produces ATP from ADP in the presence of a proton gradient across the membrane. The sequence is that of V-type ATP synthase subunit C from Thermus thermophilus (strain ATCC BAA-163 / DSM 7039 / HB27).